The sequence spans 332 residues: UDP-3-O-acylglucosamine N-acyltransferase (332 aa).

H231 acts as the Proton acceptor in catalysis.

It belongs to the transferase hexapeptide repeat family. LpxD subfamily. In terms of assembly, homotrimer.

The enzyme catalyses a UDP-3-O-[(3R)-3-hydroxyacyl]-alpha-D-glucosamine + a (3R)-hydroxyacyl-[ACP] = a UDP-2-N,3-O-bis[(3R)-3-hydroxyacyl]-alpha-D-glucosamine + holo-[ACP] + H(+). It participates in bacterial outer membrane biogenesis; LPS lipid A biosynthesis. Its function is as follows. Catalyzes the N-acylation of UDP-3-O-acylglucosamine using 3-hydroxyacyl-ACP as the acyl donor. Is involved in the biosynthesis of lipid A, a phosphorylated glycolipid that anchors the lipopolysaccharide to the outer membrane of the cell. The polypeptide is UDP-3-O-acylglucosamine N-acyltransferase (Ruthia magnifica subsp. Calyptogena magnifica).